The chain runs to 247 residues: MSGHSKFANIAHKKAANDAAKGKIFTRLGKELMIAVKEGGPDVNNNSKLRQVVAKCKAANMPNDTIDRAIKKAASNDMSNYESVTYEGYGPNGTAIIVEALTDNRNRAASNIRSAFTKGGGNVGTPGCVSFMFDNKGQMIVDKEEYTGDADELMMLALDAGADDFNEEEDCYEILTSPEEFDAVNQALADAGVTFASAEVTMIPQTTVDLTSEDDIKKMNRILGLLDEDDDVQNVYHNWNEPEEDEE.

Belongs to the TACO1 family.

The protein localises to the cytoplasm. This is Probable transcriptional regulatory protein EUBELI_00902 from Lachnospira eligens (strain ATCC 27750 / DSM 3376 / VPI C15-48 / C15-B4) (Eubacterium eligens).